The chain runs to 430 residues: Sesquiterpene synthase Agr5 (430 aa).

The first 25 residues, 1 to 25 (MASSLLEPSLAAIALVILLASVSLS), serve as a signal peptide directing secretion. Asn113 is a glycosylation site (N-linked (GlcNAc...) asparagine). Positions 176, 311, 315, and 319 each coordinate Mg(2+). The DDXXD motif signature appears at 176-180 (DEYTD). 2 residues coordinate (2E,6E)-farnesyl diphosphate: Arg401 and Tyr402.

It belongs to the terpene synthase family. Mg(2+) is required as a cofactor.

The catalysed reaction is (2E,6E)-farnesyl diphosphate = viridiflorene + diphosphate. Terpene cyclase that catalyzes the cyclization of farnesyl diphosphate (FPP) to viridiflorene and viridiflorol. The protein is Sesquiterpene synthase Agr5 of Cyclocybe aegerita (Black poplar mushroom).